A 63-amino-acid chain; its full sequence is Large ribosomal subunit protein uL30 (63 aa).

It belongs to the universal ribosomal protein uL30 family. As to quaternary structure, part of the 50S ribosomal subunit.

This chain is Large ribosomal subunit protein uL30, found in Rickettsia akari (strain Hartford).